A 490-amino-acid chain; its full sequence is Aspartyl/glutamyl-tRNA(Asn/Gln) amidotransferase subunit B (490 aa).

Belongs to the GatB/GatE family. GatB subfamily. As to quaternary structure, heterotrimer of A, B and C subunits.

The catalysed reaction is L-glutamyl-tRNA(Gln) + L-glutamine + ATP + H2O = L-glutaminyl-tRNA(Gln) + L-glutamate + ADP + phosphate + H(+). It catalyses the reaction L-aspartyl-tRNA(Asn) + L-glutamine + ATP + H2O = L-asparaginyl-tRNA(Asn) + L-glutamate + ADP + phosphate + 2 H(+). Functionally, allows the formation of correctly charged Asn-tRNA(Asn) or Gln-tRNA(Gln) through the transamidation of misacylated Asp-tRNA(Asn) or Glu-tRNA(Gln) in organisms which lack either or both of asparaginyl-tRNA or glutaminyl-tRNA synthetases. The reaction takes place in the presence of glutamine and ATP through an activated phospho-Asp-tRNA(Asn) or phospho-Glu-tRNA(Gln). This is Aspartyl/glutamyl-tRNA(Asn/Gln) amidotransferase subunit B from Synechococcus sp. (strain JA-2-3B'a(2-13)) (Cyanobacteria bacterium Yellowstone B-Prime).